We begin with the raw amino-acid sequence, 291 residues long: 33 kDa chaperonin (291 aa).

2 disulfide bridges follow: Cys-235-Cys-237 and Cys-268-Cys-271.

It belongs to the HSP33 family. Post-translationally, under oxidizing conditions two disulfide bonds are formed involving the reactive cysteines. Under reducing conditions zinc is bound to the reactive cysteines and the protein is inactive.

It is found in the cytoplasm. Functionally, redox regulated molecular chaperone. Protects both thermally unfolding and oxidatively damaged proteins from irreversible aggregation. Plays an important role in the bacterial defense system toward oxidative stress. This chain is 33 kDa chaperonin, found in Streptococcus agalactiae serotype III (strain NEM316).